The chain runs to 213 residues: MGQKVHPFGFRLGYNKNWQSRWFSKKEYASFVFEDHNIRKYVKKTLYHAGLSKIEIERAGGKVRLILSTARPGIVIGRKGVEIEKLRADLRRKFSREFSIEVNEIRRPETDAQLVAENIAMQLERRVAFRRAMKRTVSMSRKFGAEGIKVACAGRLAGAEIARSEWYRDGRVPLQTLRADIDYGYAEAHTTYGIIGVKVWIFKGEILDNEVEQ.

Positions 38–106 (IRKYVKKTLY…EFSIEVNEIR (69 aa)) constitute a KH type-2 domain.

Belongs to the universal ribosomal protein uS3 family. Part of the 30S ribosomal subunit. Forms a tight complex with proteins S10 and S14.

Binds the lower part of the 30S subunit head. Binds mRNA in the 70S ribosome, positioning it for translation. This Oleidesulfovibrio alaskensis (strain ATCC BAA-1058 / DSM 17464 / G20) (Desulfovibrio alaskensis) protein is Small ribosomal subunit protein uS3.